The following is a 254-amino-acid chain: Cyclin homolog (254 aa).

The protein belongs to the cyclin family. Cyclin D subfamily.

Functionally, may be highly relevant to the process of cellular transformation and rapid T-cell proliferation effected by HVS during latent infections of T-cells in susceptible hosts. The chain is Cyclin homolog (72) from Saimiriine herpesvirus 2 (strain 11) (SaHV-2).